A 264-amino-acid polypeptide reads, in one-letter code: Thymidylate synthase (264 aa).

DUMP is bound at residue Arg-21. His-51 is a binding site for (6R)-5,10-methylene-5,6,7,8-tetrahydrofolate. A dUMP-binding site is contributed by 126–127 (RR). Residue Cys-146 is the Nucleophile of the active site. Residues 166 to 169 (RSAD), Asn-177, and 207 to 209 (HLY) contribute to the dUMP site. A (6R)-5,10-methylene-5,6,7,8-tetrahydrofolate-binding site is contributed by Asp-169. Ala-263 lines the (6R)-5,10-methylene-5,6,7,8-tetrahydrofolate pocket.

It belongs to the thymidylate synthase family. Bacterial-type ThyA subfamily. As to quaternary structure, homodimer.

The protein localises to the cytoplasm. It catalyses the reaction dUMP + (6R)-5,10-methylene-5,6,7,8-tetrahydrofolate = 7,8-dihydrofolate + dTMP. Its pathway is pyrimidine metabolism; dTTP biosynthesis. Functionally, catalyzes the reductive methylation of 2'-deoxyuridine-5'-monophosphate (dUMP) to 2'-deoxythymidine-5'-monophosphate (dTMP) while utilizing 5,10-methylenetetrahydrofolate (mTHF) as the methyl donor and reductant in the reaction, yielding dihydrofolate (DHF) as a by-product. This enzymatic reaction provides an intracellular de novo source of dTMP, an essential precursor for DNA biosynthesis. This Bartonella bacilliformis (strain ATCC 35685 / KC583 / Herrer 020/F12,63) protein is Thymidylate synthase.